Here is a 147-residue protein sequence, read N- to C-terminus: MRLAIMLSATAVAINFATSSAIDQTKVLVYGTPAHYIHDSAGRRLLRKNEENEETSEERAPNFNLANLNEEMFNVAALTERADAKKLAKQLMGNDKLADAAYMWWQHNRVTLDQIDTFLKLASRKTQGAKYNQIYNSYMMHLGLTGY.

The first 21 residues, 1–21 (MRLAIMLSATAVAINFATSSA), serve as a signal peptide directing secretion. Positions 44 to 59 (RLLRKNEENEETSEER) match the RxLR-dEER motif. Lys48 carries the N6-acetyllysine modification. Positions 77–147 (ALTERADAKK…YMMHLGLTGY (71 aa)) are effector domain.

It belongs to the RxLR effector family. In terms of assembly, forms homodimers via the RxLR-dEER motif. Interacts with host E3 ligase CMPG1. Interacts with host DRP2. Post-translationally, proteolytically cleaved. The cleavage site directly after the RxLR sequence and the high conservation among other effector proteins suggest that the RxLR motif might play a crucial role in the intracellular processing before secretion. In terms of processing, glycosylated. N-acetylated at Lys-48 after cleavage.

It localises to the secreted. Its subcellular location is the host cytoplasm. Multifunctional effector that can suppress host BAK1/SERK3-mediated immunity through at least two different pathways. Manipulates plant immunity by targeting and stabilizing host E3 ligase CMPG1. Preventing the normal 26S proteasome-dependent degradation of potato CMPG1, and thus potentially of its protein substrates in the host cell, further abolishes host cell death during the biotrophic phase of infection. Also associates with and affects the function of the dynamin-related protein 2 (DRP2), a plant GTPase involved in immune receptor-mediated endocytosis. The Avr3a(EM) form evades recognition by R3a, thus does not trigger R3a-mediated hypersensitivity and does not suppress INF1-induced cell death. The chain is RxLR effector protein Avr3a from Phytophthora infestans (Potato late blight agent).